The following is a 284-amino-acid chain: Nucleotide-binding protein VSAL_I0495 (284 aa).

8–15 (GNSGAGKS) serves as a coordination point for ATP. 56-59 (DIRN) contributes to the GTP binding site.

Belongs to the RapZ-like family.

Displays ATPase and GTPase activities. The sequence is that of Nucleotide-binding protein VSAL_I0495 from Aliivibrio salmonicida (strain LFI1238) (Vibrio salmonicida (strain LFI1238)).